Reading from the N-terminus, the 216-residue chain is Vascular endothelial growth factor A (216 aa).

Residues 1 to 26 (MNFLLTWIHWGLAALLYLQSAELSKA) form the signal peptide. 3 disulfide bridges follow: C52-C94, C83-C128, and C87-C130. An N-linked (GlcNAc...) asparagine glycan is attached at N101. The segment covering 132–141 (PKKDVKNKQE) has biased composition (basic and acidic residues). Positions 132–167 (PKKDVKNKQEKKSKRGKGKGQKRKRKKGRYKPPSFH) are disordered. The span at 142–161 (KKSKRGKGKGQKRKRKKGRY) shows a compositional bias: basic residues.

The protein belongs to the PDGF/VEGF growth factor family. In terms of assembly, homodimer; disulfide-linked. Also found as heterodimer with PGF.

Its function is as follows. Growth factor active in angiogenesis, vasculogenesis and endothelial cell growth. Induces endothelial cell proliferation, promotes cell migration, inhibits apoptosis and induces permeabilization of blood vessels. Binds to the FLT1/VEGFR1 and KDR/VEGFR2 receptors, heparan sulfate and heparin. The chain is Vascular endothelial growth factor A (VEGFA) from Gallus gallus (Chicken).